Consider the following 256-residue polypeptide: Protein LIKE COV 1 (256 aa).

Basic and acidic residues predominate over residues 1-10; it reads MANRERDREL. The tract at residues 1–39 is disordered; it reads MANRERDRELLIPVADFGDKDDGSSSKPSSSSSASSSHQ. At 1-60 the chain is on the cytoplasmic side; that stretch reads MANRERDRELLIPVADFGDKDDGSSSKPSSSSSASSSHQSGHETLSLFIRGWASKKFMTG. A compositionally biased stretch (low complexity) spans 25–39; the sequence is SSKPSSSSSASSSHQ. A helical transmembrane segment spans residues 61 to 81; the sequence is CVILLPIAVTFYTTWWFIHFV. Over 82-93 the chain is Extracellular; the sequence is DGFFSPIYALLG. Residues 94-114 form a helical membrane-spanning segment; sequence INIFGFGFLTSIAFIFLVGVF. The Cytoplasmic portion of the chain corresponds to 115-256; that stretch reads MSSWLGASVL…KPLASIGNES (142 aa).

The protein belongs to the plant COV1 protein family. In terms of tissue distribution, expressed at low levels in flowers, stems, roots and leaves.

The protein resides in the membrane. In Arabidopsis thaliana (Mouse-ear cress), this protein is Protein LIKE COV 1.